Consider the following 143-residue polypeptide: SsrA-binding protein (143 aa).

Belongs to the SmpB family.

The protein localises to the cytoplasm. In terms of biological role, required for rescue of stalled ribosomes mediated by trans-translation. Binds to transfer-messenger RNA (tmRNA), required for stable association of tmRNA with ribosomes. tmRNA and SmpB together mimic tRNA shape, replacing the anticodon stem-loop with SmpB. tmRNA is encoded by the ssrA gene; the 2 termini fold to resemble tRNA(Ala) and it encodes a 'tag peptide', a short internal open reading frame. During trans-translation Ala-aminoacylated tmRNA acts like a tRNA, entering the A-site of stalled ribosomes, displacing the stalled mRNA. The ribosome then switches to translate the ORF on the tmRNA; the nascent peptide is terminated with the 'tag peptide' encoded by the tmRNA and targeted for degradation. The ribosome is freed to recommence translation, which seems to be the essential function of trans-translation. This chain is SsrA-binding protein, found in Deinococcus geothermalis (strain DSM 11300 / CIP 105573 / AG-3a).